Reading from the N-terminus, the 80-residue chain is Small ribosomal subunit protein bS16 (80 aa).

Belongs to the bacterial ribosomal protein bS16 family.

In Blochmanniella pennsylvanica (strain BPEN), this protein is Small ribosomal subunit protein bS16.